A 389-amino-acid chain; its full sequence is Acetate kinase (389 aa).

Asn-7 is a Mg(2+) binding site. Residue Lys-14 participates in ATP binding. Arg-88 contacts substrate. The active-site Proton donor/acceptor is Asp-145. ATP contacts are provided by residues 205–209, 279–281, and 324–328; these read HLGNG, DLR, and GIGEN. Mg(2+) is bound at residue Glu-375.

Belongs to the acetokinase family. As to quaternary structure, homodimer. Requires Mg(2+) as cofactor. Mn(2+) serves as cofactor.

The protein localises to the cytoplasm. The enzyme catalyses acetate + ATP = acetyl phosphate + ADP. It functions in the pathway metabolic intermediate biosynthesis; acetyl-CoA biosynthesis; acetyl-CoA from acetate: step 1/2. Its function is as follows. Catalyzes the formation of acetyl phosphate from acetate and ATP. Can also catalyze the reverse reaction. The chain is Acetate kinase from Sulfurimonas denitrificans (strain ATCC 33889 / DSM 1251) (Thiomicrospira denitrificans (strain ATCC 33889 / DSM 1251)).